Here is a 949-residue protein sequence, read N- to C-terminus: Protocadherin alpha-11 (949 aa).

Positions 1-29 are cleaved as a signal peptide; sequence MFGFQRRGLGTPRLQLWLLLLEFWEVGSG. Cadherin domains are found at residues 30-133, 157-242, 243-349, 350-454, 455-564, and 580-677; these read QLHY…PPVF, ASDA…DPDF, DKSE…SPEV, AVTS…APAF, AQPE…APAL, and VPRS…APKA. At 30 to 696 the chain is on the extracellular side; sequence QLHYSVSEEA…SPEAALVDVN (667 aa). N-linked (GlcNAc...) asparagine glycosylation is found at Asn265 and Asn304. The N-linked (GlcNAc...) asparagine glycan is linked to Asn547. Residues 697-717 form a helical membrane-spanning segment; sequence VYLIIAICVVSSLLVLTLLLY. Residues 718–949 lie on the Cytoplasmic side of the membrane; it reads TALWCSATPT…GNSTTDNSDQ (232 aa). PXXP repeat units lie at residues 733–736 and 773–776; these read PGKP and PSLP. The interval 733–893 is 6 X 4 AA repeats of P-X-X-P; the sequence is PGKPTLVCSR…PDKFIIPGSP (161 aa). 3 disordered regions span residues 753-807, 826-858, and 870-889; these read RRQR…DWRY, ILRA…PPVG, and YGPG…KFII. Basic and acidic residues predominate over residues 780 to 789; it reads NKEEEGERQE. PXXP repeat units follow at residues 795–798, 831–834, 872–875, and 890–893; these read PGQP, PGGP, PGNP, and PGSP. The disordered stretch occupies residues 900-949; sequence QEPANSQIDKSDFITFGKKEETKKKKKKKKGNKTQEKKEKGNSTTDNSDQ. Over residues 908-922 the composition is skewed to basic and acidic residues; the sequence is DKSDFITFGKKEETK.

It localises to the cell membrane. Functionally, potential calcium-dependent cell-adhesion protein. May be involved in the establishment and maintenance of specific neuronal connections in the brain. The protein is Protocadherin alpha-11 (PCDHA11) of Pan troglodytes (Chimpanzee).